The sequence spans 706 residues: Elongation factor G (706 aa).

The tr-type G domain occupies 8-290 (NRYRNIGICA…AVIDYLPAPT (283 aa)). GTP-binding positions include 17 to 24 (AHVDAGKT), 88 to 92 (DTPGH), and 142 to 145 (NKMD).

The protein belongs to the TRAFAC class translation factor GTPase superfamily. Classic translation factor GTPase family. EF-G/EF-2 subfamily.

Its subcellular location is the cytoplasm. Catalyzes the GTP-dependent ribosomal translocation step during translation elongation. During this step, the ribosome changes from the pre-translocational (PRE) to the post-translocational (POST) state as the newly formed A-site-bound peptidyl-tRNA and P-site-bound deacylated tRNA move to the P and E sites, respectively. Catalyzes the coordinated movement of the two tRNA molecules, the mRNA and conformational changes in the ribosome. The sequence is that of Elongation factor G from Stutzerimonas stutzeri (strain A1501) (Pseudomonas stutzeri).